The primary structure comprises 436 residues: GTPase Der (436 aa).

EngA-type G domains are found at residues 4–167 (PVVA…KNLP) and 176–351 (VQFC…ENHA). GTP contacts are provided by residues 10–17 (GRPNVGKS), 57–61 (DTGGI), 119–122 (NKLD), 182–189 (GRPNVGKS), 229–233 (DTAGM), and 294–297 (NKWD). In terms of domain architecture, KH-like spans 352-436 (MRVQTNILND…PIKIFARARK (85 aa)).

It belongs to the TRAFAC class TrmE-Era-EngA-EngB-Septin-like GTPase superfamily. EngA (Der) GTPase family. As to quaternary structure, associates with the 50S ribosomal subunit.

In terms of biological role, GTPase that plays an essential role in the late steps of ribosome biogenesis. The chain is GTPase Der from Bacillus pumilus (strain SAFR-032).